A 454-amino-acid chain; its full sequence is Bifunctional protein GlmU (454 aa).

A pyrophosphorylase region spans residues 1–228; the sequence is MNKCAIILAA…FEETLGVNSR (228 aa). Residues 8-11, K22, Q73, and 78-79 contribute to the UDP-N-acetyl-alpha-D-glucosamine site; these read LAAG and GT. D103 is a binding site for Mg(2+). UDP-N-acetyl-alpha-D-glucosamine contacts are provided by G140, E154, N169, and N226. N226 lines the Mg(2+) pocket. Residues 229 to 249 are linker; the sequence is AELAKVESIMRNRINRTHLDN. The segment at 250 to 454 is N-acetyltransferase; that stretch reads GVTIIDPLNT…EGWVERKKLK (205 aa). UDP-N-acetyl-alpha-D-glucosamine contacts are provided by R331 and K349. Catalysis depends on H361, which acts as the Proton acceptor. Residues Y364 and N375 each coordinate UDP-N-acetyl-alpha-D-glucosamine. Acetyl-CoA contacts are provided by residues 384-385, A421, and R438; that span reads NY.

In the N-terminal section; belongs to the N-acetylglucosamine-1-phosphate uridyltransferase family. It in the C-terminal section; belongs to the transferase hexapeptide repeat family. As to quaternary structure, homotrimer. Mg(2+) is required as a cofactor.

It localises to the cytoplasm. It catalyses the reaction alpha-D-glucosamine 1-phosphate + acetyl-CoA = N-acetyl-alpha-D-glucosamine 1-phosphate + CoA + H(+). The catalysed reaction is N-acetyl-alpha-D-glucosamine 1-phosphate + UTP + H(+) = UDP-N-acetyl-alpha-D-glucosamine + diphosphate. It participates in nucleotide-sugar biosynthesis; UDP-N-acetyl-alpha-D-glucosamine biosynthesis; N-acetyl-alpha-D-glucosamine 1-phosphate from alpha-D-glucosamine 6-phosphate (route II): step 2/2. It functions in the pathway nucleotide-sugar biosynthesis; UDP-N-acetyl-alpha-D-glucosamine biosynthesis; UDP-N-acetyl-alpha-D-glucosamine from N-acetyl-alpha-D-glucosamine 1-phosphate: step 1/1. The protein operates within bacterial outer membrane biogenesis; LPS lipid A biosynthesis. In terms of biological role, catalyzes the last two sequential reactions in the de novo biosynthetic pathway for UDP-N-acetylglucosamine (UDP-GlcNAc). The C-terminal domain catalyzes the transfer of acetyl group from acetyl coenzyme A to glucosamine-1-phosphate (GlcN-1-P) to produce N-acetylglucosamine-1-phosphate (GlcNAc-1-P), which is converted into UDP-GlcNAc by the transfer of uridine 5-monophosphate (from uridine 5-triphosphate), a reaction catalyzed by the N-terminal domain. The polypeptide is Bifunctional protein GlmU (Clostridium perfringens (strain ATCC 13124 / DSM 756 / JCM 1290 / NCIMB 6125 / NCTC 8237 / Type A)).